A 210-amino-acid chain; its full sequence is Thymidylate kinase (210 aa).

10-17 (GPEGAGKS) serves as a coordination point for ATP.

Belongs to the thymidylate kinase family.

It carries out the reaction dTMP + ATP = dTDP + ADP. In terms of biological role, phosphorylation of dTMP to form dTDP in both de novo and salvage pathways of dTTP synthesis. In Pseudomonas fluorescens (strain Pf0-1), this protein is Thymidylate kinase.